The following is a 142-amino-acid chain: Large ribosomal subunit protein uL11 (142 aa).

Belongs to the universal ribosomal protein uL11 family. As to quaternary structure, part of the ribosomal stalk of the 50S ribosomal subunit. Interacts with L10 and the large rRNA to form the base of the stalk. L10 forms an elongated spine to which L12 dimers bind in a sequential fashion forming a multimeric L10(L12)X complex. One or more lysine residues are methylated.

Forms part of the ribosomal stalk which helps the ribosome interact with GTP-bound translation factors. The polypeptide is Large ribosomal subunit protein uL11 (Xanthomonas campestris pv. campestris (strain B100)).